A 564-amino-acid polypeptide reads, in one-letter code: Hexose transporter HXT17 (564 aa).

A compositionally biased stretch (basic and acidic residues) spans 1 to 12 (MQSSTESDRDIQ). The tract at residues 1–22 (MQSSTESDRDIQDGPDADIHVA) is disordered. Over 1–52 (MQSSTESDRDIQDGPDADIHVAPPVEKEWSDGFDDNEVINGDNVEPPKRGLI) the chain is Cytoplasmic. Residues 53-73 (GYLVIYLLCYPISFGGFLPGW) form a helical membrane-spanning segment. Topologically, residues 74–109 (DSGITAGFINMDNFKMNFGSYKHSTGEYYLSNVRMG) are extracellular. A helical transmembrane segment spans residues 110 to 130 (LLVAMFSIGCAIGGLIFARLA). Residues 131-136 (DTLGRR) are Cytoplasmic-facing. The helical transmembrane segment at 137 to 157 (LAIVIVVLVYMVGAIIQISSN) threads the bilayer. Residues 158-167 (HKWYQYFVGK) are Extracellular-facing. The chain crosses the membrane as a helical span at residues 168–188 (IIYGLGAGGCSVLCPMLLSEI). The Cytoplasmic portion of the chain corresponds to 189 to 194 (APTDLR). A helical transmembrane segment spans residues 195–215 (GGLVSLYQLNMTFGIFLGYCS). Over 216 to 229 (VYGTRKYDNTAQWR) the chain is Extracellular. A helical membrane pass occupies residues 230–250 (VPLGLCFLWTLIIIIGMLLVP). Over 251 to 333 (ESPRYLIECE…VQTFLQLTGE (83 aa)) the chain is Cytoplasmic. Residues 334–350 (NYFFFYGTTIFKSVGLT) traverse the membrane as a helical segment. The Extracellular segment spans residues 351–356 (DGFETS). The helical transmembrane segment at 357–374 (IVLGTVNFFSTIIAVMVV) threads the bilayer. The Cytoplasmic portion of the chain corresponds to 375–381 (DKIGRRK). A helical membrane pass occupies residues 382–402 (CLLFGAAGMMACMVIFASIGV). The Extracellular segment spans residues 403-424 (KCLYPHGQDGPSSKGAGNAMIV). A helical membrane pass occupies residues 425–445 (FTCFYIFCFATTWAPVAYIVV). The Cytoplasmic portion of the chain corresponds to 446–462 (AESFPSKVKSRAMSIST). Residues 463-483 (ACNWLWQFLIGFFTPFITGSI) traverse the membrane as a helical segment. Position 484 (His-484) is a topological domain, extracellular. The chain crosses the membrane as a helical span at residues 485-505 (FYYGYVFVGCLVAMFLYVFFF). Over 506–564 (LPETIGLSLEEIQLLYEEGIKPWKSASWVPPSRRGIPSEESKTEKKDWKKFLKFSKGSD) the chain is Cytoplasmic.

Belongs to the major facilitator superfamily. Sugar transporter (TC 2.A.1.1) family.

It is found in the membrane. Functionally, probable glucose transporter. This chain is Hexose transporter HXT17 (HXT17), found in Saccharomyces cerevisiae (strain ATCC 204508 / S288c) (Baker's yeast).